Consider the following 1165-residue polypeptide: Valine--tRNA ligase (1165 aa).

The 'HIGH' region motif lies at 43–53 (PNVTGSLHMGH). The 'KMSKS' region motif lies at 800–804 (KMSKT). Lys-803 is a binding site for ATP. Coiled coils occupy residues 1001 to 1032 (KNED…SDLQ) and 1097 to 1165 (HVDL…VLRS).

This sequence belongs to the class-I aminoacyl-tRNA synthetase family. ValS type 1 subfamily. Monomer.

The protein resides in the cytoplasm. The enzyme catalyses tRNA(Val) + L-valine + ATP = L-valyl-tRNA(Val) + AMP + diphosphate. Its function is as follows. Catalyzes the attachment of valine to tRNA(Val). As ValRS can inadvertently accommodate and process structurally similar amino acids such as threonine, to avoid such errors, it has a 'posttransfer' editing activity that hydrolyzes mischarged Thr-tRNA(Val) in a tRNA-dependent manner. This is Valine--tRNA ligase from Aquifex aeolicus (strain VF5).